A 795-amino-acid chain; its full sequence is Plakophilin-2 (795 aa).

A required for binding to single-stranded DNA region spans residues 1-318 (MAVPGSLAEC…MTLERAVNML (318 aa)). Ser44 carries the post-translational modification Phosphoserine. Arg46 carries the omega-N-methylarginine modification. Ser82, Ser132, Ser135, Ser151, Ser154, Ser155, Ser172, Ser188, and Ser232 each carry phosphoserine. Disordered regions lie at residues 197-233 (GTAR…SHSA) and 245-274 (SQAR…REPG). The segment covering 245–257 (SQARLQSTQSRTA) has biased composition (polar residues). The segment covering 258–268 (RSSWPRSSVRS) has biased composition (low complexity). Ser265 and Ser287 each carry phosphoserine. ARM repeat units lie at residues 299–339 (DAQL…QHES), 343–382 (SEAR…NLVF), 385–425 (NDNK…NLSS), 484–530 (PDGR…NLSY), 585–625 (PHGI…NLTA), 633–672 (LVAR…NLSR), 677–718 (QNEI…NLMQ), and 721–763 (YQNA…SLWA).

This sequence belongs to the beta-catenin family. As to quaternary structure, interacts with DSC2. Interacts with JUP. Interacts with KRT5/CK5, KRT8/CK8, KRT14/CK14, KRT18/CK18 and VIM. Interacts (via N-terminus) with MARK3/C-TAK1. Interacts with DSP. Interacts with DSG1, DSG2 and DSG3. Interacts (via N-terminus) with CTNNB1. Interacts with CDH1. Interacts with the RNA polymerase III (Pol III) complex proteins POLR3A/RPC155, POLR3F/RPC39 and POLR3C/RPC82. Interacts with CTNNA3. Interacts (via N-terminus) with SCN5A/Nav1.5. Interacts with ANK3/ANKG and GJA1/CX43. Expressed in cardiomyocytes in the heart (at protein level).

The protein localises to the nucleus. It is found in the cell junction. The protein resides in the desmosome. It localises to the cytoplasm. In terms of biological role, a component of desmosome cell-cell junctions which are required for positive regulation of cellular adhesion. Regulates focal adhesion turnover resulting in changes in focal adhesion size, cell adhesion and cell spreading, potentially via transcriptional modulation of beta-integrins. Required to maintain gingival epithelial barrier function. Important component of the desmosome that is also required for localization of desmosome component proteins such as DSC2, DSG2 and JUP to the desmosome cell-cell junction. Required for the formation of desmosome cell junctions in cardiomyocytes, thereby required for the correct formation of the heart, specifically trabeculation and formation of the atria walls. Loss of desmosome cell junctions leads to mis-localization of DSP and DSG2 resulting in disruption of cell-cell adhesion and disordered intermediate filaments. Modulates profibrotic gene expression in cardiomyocytes via regulation of DSP expression and subsequent activation of downstream TGFB1 and MAPK14/p38 MAPK signaling. Required for cardiac sodium current propagation and electrical synchrony in cardiac myocytes, via ANK3 stabilization and modulation of SCN5A/Nav1.5 localization to cell-cell junctions. Required for mitochondrial function, nuclear envelope integrity and positive regulation of SIRT3 transcription via maintaining DES localization at its nuclear envelope and cell tip anchoring points, and thereby preserving regulation of the transcriptional program. Maintenance of nuclear envelope integrity protects against DNA damage and transcriptional dysregulation of genes, especially those involved in the electron transport chain, thereby preserving mitochondrial function and protecting against superoxide radical anion generation. Binds single-stranded DNA (ssDNA). May regulate the localization of GJA1 to gap junctions in intercalated disks of the heart. The chain is Plakophilin-2 from Mus musculus (Mouse).